The following is a 157-amino-acid chain: S-ribosylhomocysteine lyase (157 aa).

Fe cation is bound by residues His54, His58, and Cys124.

This sequence belongs to the LuxS family. In terms of assembly, homodimer. The cofactor is Fe cation.

It catalyses the reaction S-(5-deoxy-D-ribos-5-yl)-L-homocysteine = (S)-4,5-dihydroxypentane-2,3-dione + L-homocysteine. In terms of biological role, involved in the synthesis of autoinducer 2 (AI-2) which is secreted by bacteria and is used to communicate both the cell density and the metabolic potential of the environment. The regulation of gene expression in response to changes in cell density is called quorum sensing. Catalyzes the transformation of S-ribosylhomocysteine (RHC) to homocysteine (HC) and 4,5-dihydroxy-2,3-pentadione (DPD). The polypeptide is S-ribosylhomocysteine lyase (Lactobacillus acidophilus (strain ATCC 700396 / NCK56 / N2 / NCFM)).